Here is a 983-residue protein sequence, read N- to C-terminus: Nitrate reductase [NADPH] (983 aa).

Composition is skewed to low complexity over residues 1-14 and 26-48; these read MTISTTSSSTSSKT and SSSSSPASSRSSSATTPEPSSPT. Positions 1 to 50 are disordered; it reads MTISTTSSSTSSKTSSEKGDDLKGFSSSSSPASSRSSSATTPEPSSPTVL. Cysteine 184 provides a ligand contact to Mo-molybdopterin. A Cytochrome b5 heme-binding domain is found at 585–662; it reads DTIITAADLA…LRDFHLGRLE (78 aa). Heme-binding residues include histidine 622 and histidine 645. Residues 688 to 815 form the FAD-binding FR-type domain; the sequence is KKWRATRLVS…KGPLGSFTYL (128 aa). FAD is bound by residues 746–749, 763–767, phenylalanine 768, phenylalanine 780, 784–786, serine 841, and threonine 844; these read RAYT, LIKVY, and KMT. 952 to 961 contributes to the NADP(+) binding site; sequence LALVCGPPPM.

This sequence belongs to the nitrate reductase family. As to quaternary structure, homodimer. It depends on FAD as a cofactor. The cofactor is heme. Mo-molybdopterin serves as cofactor.

It catalyses the reaction nitrite + NADP(+) + H2O = nitrate + NADPH + H(+). Its pathway is nitrogen metabolism; nitrate reduction (assimilation). Functionally, nitrate reductase is a key enzyme involved in the first step of nitrate assimilation in plants, fungi and bacteria. The protein is Nitrate reductase [NADPH] (NAR1) of Mycosarcoma maydis (Corn smut fungus).